Here is a 699-residue protein sequence, read N- to C-terminus: Elongation factor G (699 aa).

The 281-residue stretch at 8-288 folds into the tr-type G domain; that stretch reads EDYRNFGIMA…AVVDYLPSPV (281 aa). GTP contacts are provided by residues 17–24, 86–90, and 140–143; these read AHIDAGKT, DTPGH, and NKMD.

It belongs to the TRAFAC class translation factor GTPase superfamily. Classic translation factor GTPase family. EF-G/EF-2 subfamily.

The protein resides in the cytoplasm. Catalyzes the GTP-dependent ribosomal translocation step during translation elongation. During this step, the ribosome changes from the pre-translocational (PRE) to the post-translocational (POST) state as the newly formed A-site-bound peptidyl-tRNA and P-site-bound deacylated tRNA move to the P and E sites, respectively. Catalyzes the coordinated movement of the two tRNA molecules, the mRNA and conformational changes in the ribosome. The polypeptide is Elongation factor G (Sinorhizobium medicae (strain WSM419) (Ensifer medicae)).